The primary structure comprises 353 residues: 3'-5' exonuclease (353 aa).

Residues 1-119 (MEKYLTKMPI…PSPEKEKPEK (119 aa)) are disordered. Composition is skewed to basic and acidic residues over residues 13–30 (KANE…ETPK) and 37–50 (KKDT…KENA). A compositionally biased stretch (basic residues) spans 59-70 (TKGRPGRPAAKR). A compositionally biased stretch (basic and acidic residues) spans 71-90 (KNLDTPDVTEKLAMEEENPP). Phosphoserine occurs at positions 103, 109, and 111. Positions 145–313 (VLQWVEKQKD…GQVIYRELER (169 aa)) constitute a 3'-5' exonuclease domain. Mg(2+)-binding residues include D162, E164, and D300.

It belongs to the WRNexo family.

It localises to the nucleus. In terms of biological role, has exonuclease activity on both single-stranded and duplex templates bearing overhangs, but not blunt ended duplex DNA, and cleaves in a 3'-5' direction. Essential for the formation of DNA replication focal centers. Has an important role in maintaining genome stability. The chain is 3'-5' exonuclease from Drosophila melanogaster (Fruit fly).